The following is a 190-amino-acid chain: Xanthine phosphoribosyltransferase (190 aa).

The xanthine site is built by Leu20 and Asn27. 128–132 contacts 5-phospho-alpha-D-ribose 1-diphosphate; sequence ANGKA. A xanthine-binding site is contributed by Lys156.

Belongs to the purine/pyrimidine phosphoribosyltransferase family. Xpt subfamily. In terms of assembly, homodimer.

It localises to the cytoplasm. The enzyme catalyses XMP + diphosphate = xanthine + 5-phospho-alpha-D-ribose 1-diphosphate. It participates in purine metabolism; XMP biosynthesis via salvage pathway; XMP from xanthine: step 1/1. In terms of biological role, converts the preformed base xanthine, a product of nucleic acid breakdown, to xanthosine 5'-monophosphate (XMP), so it can be reused for RNA or DNA synthesis. This is Xanthine phosphoribosyltransferase from Finegoldia magna (strain ATCC 29328 / DSM 20472 / WAL 2508) (Peptostreptococcus magnus).